Reading from the N-terminus, the 121-residue chain is Chromosome transmission fidelity protein 8 homolog (121 aa).

The protein belongs to the CTF8 family. In terms of assembly, component of the CTF18-RFC complex, which consists of CTF18, CTF8, DSCC1, RFC2, RFC3, RFC4 and RFC5. The CTF18-RFC complex does not interact with the Rad9/Rad1/Hus1 complex. The CTF18-RFC complex interacts with POLH. CTF18/CTF8/DSCC1 associate with PCNA. CTF8 exists as a dimer with DSCC1.

It localises to the nucleus. Functionally, chromosome cohesion factor involved in sister chromatid cohesion and fidelity of chromosome transmission. Component of one of the cell nuclear antigen loader complexes, CTF18-replication factor C (CTF18-RFC), which consists of CTF18, CTF8, DSCC1, RFC2, RFC3, RFC4 and RFC5. The CTF18-RFC complex binds to single-stranded and primed DNAs and has weak ATPase activity that is stimulated the presence of primed DNA, replication protein A (RPA) and proliferating cell nuclear antigen (PCNA). The CTF18-RFC complex catalyzes the ATP-dependent loading of PCNA onto primed and gapped DNA. It also interacts with and stimulates POLH, which is suggestive of a protein network that coordinates DNA repair, recombination and chromosome cohesion reactions with replication fork progression. The chain is Chromosome transmission fidelity protein 8 homolog from Rattus norvegicus (Rat).